The primary structure comprises 40 residues: Photosystem II reaction center protein J (40 aa).

Residues 8–28 (IPLWLIGTVTGIPVIGLIGIF) form a helical membrane-spanning segment.

The protein belongs to the PsbJ family. As to quaternary structure, PSII is composed of 1 copy each of membrane proteins PsbA, PsbB, PsbC, PsbD, PsbE, PsbF, PsbH, PsbI, PsbJ, PsbK, PsbL, PsbM, PsbT, PsbX, PsbY, PsbZ, Psb30/Ycf12, at least 3 peripheral proteins of the oxygen-evolving complex and a large number of cofactors. It forms dimeric complexes.

The protein localises to the plastid. It localises to the chloroplast thylakoid membrane. Its function is as follows. One of the components of the core complex of photosystem II (PSII). PSII is a light-driven water:plastoquinone oxidoreductase that uses light energy to abstract electrons from H(2)O, generating O(2) and a proton gradient subsequently used for ATP formation. It consists of a core antenna complex that captures photons, and an electron transfer chain that converts photonic excitation into a charge separation. The sequence is that of Photosystem II reaction center protein J from Vitis vinifera (Grape).